We begin with the raw amino-acid sequence, 300 residues long: Ubiquinone biosynthesis protein COQ4, mitochondrial (300 aa).

The Zn(2+) site is built by His173, Asp174, His177, and Glu189.

The protein belongs to the COQ4 family. In terms of assembly, component of a multi-subunit COQ enzyme complex, composed of at least COQ3, COQ4, COQ5, COQ6, COQ7 and COQ9. The cofactor is Zn(2+).

It localises to the mitochondrion inner membrane. It carries out the reaction a 4-hydroxy-3-methoxy-5-(all-trans-polyprenyl)benzoate + H(+) = a 2-methoxy-6-(all-trans-polyprenyl)phenol + CO2. It participates in cofactor biosynthesis; ubiquinone biosynthesis. Functionally, lyase that catalyzes the C1-decarboxylation of 4-hydroxy-3-methoxy-5-(all-trans-polyprenyl)benzoic acid into 2-methoxy-6-(all-trans-polyprenyl)phenol during ubiquinone biosynthesis. The sequence is that of Ubiquinone biosynthesis protein COQ4, mitochondrial from Cryptococcus neoformans var. neoformans serotype D (strain B-3501A) (Filobasidiella neoformans).